The sequence spans 147 residues: Large ribosomal subunit protein uL13 (147 aa).

The disordered stretch occupies residues 126 to 147 (GGPEHPHAAQNPQPYEITQIAQ).

This sequence belongs to the universal ribosomal protein uL13 family. As to quaternary structure, part of the 50S ribosomal subunit.

In terms of biological role, this protein is one of the early assembly proteins of the 50S ribosomal subunit, although it is not seen to bind rRNA by itself. It is important during the early stages of 50S assembly. The chain is Large ribosomal subunit protein uL13 from Cutibacterium acnes (strain DSM 16379 / KPA171202) (Propionibacterium acnes).